The chain runs to 312 residues: Malate dehydrogenase (312 aa).

NAD(+) is bound by residues 7 to 13 (GAAGGIG) and aspartate 34. Positions 81 and 87 each coordinate substrate. NAD(+)-binding positions include asparagine 94 and 117–119 (ITN). Substrate is bound by residues asparagine 119 and arginine 153. Histidine 177 acts as the Proton acceptor in catalysis. Methionine 227 is an NAD(+) binding site.

It belongs to the LDH/MDH superfamily. MDH type 1 family. In terms of assembly, homodimer.

The catalysed reaction is (S)-malate + NAD(+) = oxaloacetate + NADH + H(+). Functionally, catalyzes the reversible oxidation of malate to oxaloacetate. The sequence is that of Malate dehydrogenase from Salmonella agona (strain SL483).